A 513-amino-acid chain; its full sequence is Butyrophilin subfamily 3 member A1 (513 aa).

The first 29 residues, 1–29 (MKMASFLAFLLLNFRVCLLLLQLLMPHSA), serve as a signal peptide directing secretion. 2 Ig-like V-type domains span residues 30–139 (QFSV…KALV) and 145–236 (ALGS…ASIS). Over 30–254 (QFSVLGPSGP…AQRWIAALAG (225 aa)) the chain is Extracellular. 2 disulfides stabilise this stretch: Cys52/Cys126 and Cys166/Cys220. N-linked (GlcNAc...) asparagine glycosylation occurs at Asn115. The chain crosses the membrane as a helical span at residues 255 to 271 (TLPVLLLLLGGAGYFLW). Residues 272–513 (QQQEEKKTQF…EPTALTICPA (242 aa)) lie on the Cytoplasmic side of the membrane. Positions 322 to 513 (RGERHSAYNE…EPTALTICPA (192 aa)) constitute a B30.2/SPRY domain.

It belongs to the immunoglobulin superfamily. BTN/MOG family. In terms of assembly, homodimer. In terms of processing, N-glycosylated. Detected on T-cells, natural killer cells, dendritic cells and macrophages (at protein level). Ubiquitous. Highly expressed in heart, pancreas and lung, Moderately expressed in placenta, liver and muscle.

It localises to the cell membrane. Its function is as follows. Plays a role in T-cell activation and in the adaptive immune response. Regulates the proliferation of activated T-cells. Regulates the release of cytokines and IFNG by activated T-cells. Mediates the response of T-cells toward infected and transformed cells that are characterized by high levels of phosphorylated metabolites, such as isopentenyl pyrophosphate. The polypeptide is Butyrophilin subfamily 3 member A1 (BTN3A1) (Homo sapiens (Human)).